Consider the following 459-residue polypeptide: tRNA modification GTPase MnmE (459 aa).

Residues Arg21, Glu84, and Arg123 each coordinate (6S)-5-formyl-5,6,7,8-tetrahydrofolate. The region spanning 219-378 (GVTVALAGAV…LLVLLYNFVL (160 aa)) is the TrmE-type G domain. Residues 229–234 (NAGKSS), 248–254 (TEHPGTT), and 273–276 (DTAG) contribute to the GTP site. 2 residues coordinate Mg(2+): Ser233 and Thr254. Lys459 serves as a coordination point for (6S)-5-formyl-5,6,7,8-tetrahydrofolate.

Belongs to the TRAFAC class TrmE-Era-EngA-EngB-Septin-like GTPase superfamily. TrmE GTPase family. In terms of assembly, homodimer. Heterotetramer of two MnmE and two MnmG subunits. Requires K(+) as cofactor.

It localises to the cytoplasm. Exhibits a very high intrinsic GTPase hydrolysis rate. Involved in the addition of a carboxymethylaminomethyl (cmnm) group at the wobble position (U34) of certain tRNAs, forming tRNA-cmnm(5)s(2)U34. The protein is tRNA modification GTPase MnmE of Lawsonia intracellularis (strain PHE/MN1-00).